The sequence spans 760 residues: Formin-like protein 8 (760 aa).

The first 29 residues, 1–29 (MAAMFNHPWPNLTLIYFFFIVVLPFQSLS), serve as a signal peptide directing secretion. Pro residues predominate over residues 52 to 63 (PLLPPSSNPSPP). A disordered region spans residues 52–71 (PLLPPSSNPSPPSNNSSSSD). Residues 78 to 98 (AVLITAASTLLVAGVFFFCLQ) form a helical membrane-spanning segment. Residues 204 to 313 (TEIPLLRGRS…VKLKPLHWDK (110 aa)) are disordered. Residues 253 to 274 (TPSPPPPIKKGSSPSPPPPPPV) are compositionally biased toward pro residues. The region spanning 296-732 (SGGETSKQVK…GSPISPSSQR (437 aa)) is the FH2 domain.

The protein belongs to the formin-like family. Class-I subfamily. Interacts with profilin.

The protein localises to the cell membrane. In terms of biological role, might be involved in the organization and polarity of the actin cytoskeleton. Interacts with the barbed end of actin filaments and nucleates actin-filament polymerization in vitro. This is Formin-like protein 8 (FH8) from Arabidopsis thaliana (Mouse-ear cress).